We begin with the raw amino-acid sequence, 101 residues long: Large ribosomal subunit protein uL24 (101 aa).

Belongs to the universal ribosomal protein uL24 family. Part of the 50S ribosomal subunit.

In terms of biological role, one of two assembly initiator proteins, it binds directly to the 5'-end of the 23S rRNA, where it nucleates assembly of the 50S subunit. Functionally, one of the proteins that surrounds the polypeptide exit tunnel on the outside of the subunit. The polypeptide is Large ribosomal subunit protein uL24 (Streptococcus mutans serotype c (strain ATCC 700610 / UA159)).